The sequence spans 435 residues: Transcription activator ACTTR (435 aa).

Residues 16 to 43 constitute a DNA-binding region (zn(2)-C6 fungal-type); that stretch reads CDFCTQSKLRCNKNKPSCRRCTIQQQPC. The segment at 48-89 is disordered; sequence ARRTGRPPKRPRKANDGQEANEQHGDQDPVTSTPGGSCQQQS. Positions 50 to 59 are enriched in basic residues; sequence RTGRPPKRPR. Residues 60–74 are compositionally biased toward basic and acidic residues; sequence KANDGQEANEQHGDQ. The segment covering 76–89 has biased composition (polar residues); sequence PVTSTPGGSCQQQS.

It localises to the nucleus. Its function is as follows. Transcription factor that regulates the expression of the gene clusters that mediate the biosynthesis of the host-selective toxins (HSTs) ACT-toxins responsible for brown spot of tangerine disease by the tangerine pathotype which affects tangerines and mandarins. ACT-toxins consist of three moieties, 9,10-epoxy-8-hydroxy-9-methyl-decatrienoic acid (EDA), valine and a polyketide. ACT-toxin I is toxic to both citrus and pear; toxin II the 5''-deoxy derivative of ACT-toxin I, is highly toxic to pear and slightly toxic to citrus. On cellular level, ACT-toxins affect plasma membrane of susceptible cells and cause a sudden increase in loss of K(+) after a few minutes of toxin treatment. The chain is Transcription activator ACTTR from Alternaria alternata (Alternaria rot fungus).